A 328-amino-acid chain; its full sequence is DNA-directed RNA polymerase subunit alpha (328 aa).

The interval 1 to 231 (MIYQMQMPEK…EHVSLFANFS (231 aa)) is alpha N-terminal domain (alpha-NTD). The alpha C-terminal domain (alpha-CTD) stretch occupies residues 252 to 328 (MRKMLLTRIE…MDITKYQMKG (77 aa)).

Belongs to the RNA polymerase alpha chain family. Homodimer. The RNAP catalytic core consists of 2 alpha, 1 beta, 1 beta' and 1 omega subunit. When a sigma factor is associated with the core the holoenzyme is formed, which can initiate transcription.

It catalyses the reaction RNA(n) + a ribonucleoside 5'-triphosphate = RNA(n+1) + diphosphate. DNA-dependent RNA polymerase catalyzes the transcription of DNA into RNA using the four ribonucleoside triphosphates as substrates. This Chlorobium phaeobacteroides (strain BS1) protein is DNA-directed RNA polymerase subunit alpha.